The sequence spans 137 residues: Holo-[acyl-carrier-protein] synthase (137 aa).

Residues Asp8 and Glu57 each coordinate Mg(2+).

It belongs to the P-Pant transferase superfamily. AcpS family. Mg(2+) is required as a cofactor.

It is found in the cytoplasm. The enzyme catalyses apo-[ACP] + CoA = holo-[ACP] + adenosine 3',5'-bisphosphate + H(+). Transfers the 4'-phosphopantetheine moiety from coenzyme A to a Ser of acyl-carrier-protein. In Cereibacter sphaeroides (strain ATCC 17025 / ATH 2.4.3) (Rhodobacter sphaeroides), this protein is Holo-[acyl-carrier-protein] synthase.